Here is a 244-residue protein sequence, read N- to C-terminus: Glutathione S-transferase theta-2 (244 aa).

Residues 2–82 form the GST N-terminal domain; the sequence is GLELFLDLVS…YLSCKYQTPD (81 aa). Glutathione is bound by residues 40-41, 53-54, 66-67, and 104-107; these read HK, KL, ES, and DCIR. The GST C-terminal domain maps to 88 to 224; it reads DLQARARVHE…SILEQAAKKT (137 aa).

The protein belongs to the GST superfamily. Theta family. In terms of assembly, homodimer. Expressed at low levels in liver. In lung, expressed at low levels in ciliated bronchiolar cells, alveolar macrophages and alveolar type II cells.

It localises to the cytoplasm. The protein resides in the cytosol. Its subcellular location is the nucleus. It carries out the reaction RX + glutathione = an S-substituted glutathione + a halide anion + H(+). In terms of biological role, conjugation of reduced glutathione to a wide number of exogenous and endogenous hydrophobic electrophiles. Has a sulfatase activity. The protein is Glutathione S-transferase theta-2 (GSTT2) of Homo sapiens (Human).